The chain runs to 170 residues: NADH-quinone oxidoreductase subunit B (170 aa).

Residues cysteine 46, cysteine 47, cysteine 111, and cysteine 141 each contribute to the [4Fe-4S] cluster site.

The protein belongs to the complex I 20 kDa subunit family. In terms of assembly, NDH-1 is composed of 14 different subunits. Subunits NuoB, C, D, E, F, and G constitute the peripheral sector of the complex. The cofactor is [4Fe-4S] cluster.

It localises to the cell membrane. The catalysed reaction is a quinone + NADH + 5 H(+)(in) = a quinol + NAD(+) + 4 H(+)(out). NDH-1 shuttles electrons from NADH, via FMN and iron-sulfur (Fe-S) centers, to quinones in the respiratory chain. The immediate electron acceptor for the enzyme in this species is believed to be a menaquinone. Couples the redox reaction to proton translocation (for every two electrons transferred, four hydrogen ions are translocated across the cytoplasmic membrane), and thus conserves the redox energy in a proton gradient. This is NADH-quinone oxidoreductase subunit B from Geobacillus thermodenitrificans (strain NG80-2).